A 141-amino-acid polypeptide reads, in one-letter code: uncharacterized protein (141 aa).

It localises to the cytoplasm. This is an uncharacterized protein from Homo sapiens (Human).